An 808-amino-acid chain; its full sequence is Type VI secretion system spike protein VgrG4b (808 aa).

This sequence belongs to the VgrG protein family.

It localises to the secreted. Part of the H2 type VI secretion system (H2-T6SS) specialized secretion system, which delivers several virulence factors in both prokaryotic and eukaryotic cells during infection. Allows the delivery of the phospholipase effector PldA to target cells where it exerts its toxicity. The sequence is that of Type VI secretion system spike protein VgrG4b from Pseudomonas aeruginosa (strain ATCC 15692 / DSM 22644 / CIP 104116 / JCM 14847 / LMG 12228 / 1C / PRS 101 / PAO1).